Reading from the N-terminus, the 176-residue chain is Xanthine-guanine phosphoribosyltransferase (176 aa).

Residues 51–52 (RG), Arg-88, and 111–119 (DDLVDSGKT) contribute to the 5-phospho-alpha-D-ribose 1-diphosphate site. Arg-88 lines the GMP pocket. Asp-112 provides a ligand contact to Mg(2+). Guanine contacts are provided by Asp-115 and Ile-158. Residues Asp-115 and Ile-158 each contribute to the xanthine site. Residues 115–119 (DSGKT) and 157–158 (WI) contribute to the GMP site.

This sequence belongs to the purine/pyrimidine phosphoribosyltransferase family. XGPT subfamily. As to quaternary structure, homotetramer. Mg(2+) serves as cofactor.

The protein localises to the cell inner membrane. It carries out the reaction GMP + diphosphate = guanine + 5-phospho-alpha-D-ribose 1-diphosphate. It catalyses the reaction XMP + diphosphate = xanthine + 5-phospho-alpha-D-ribose 1-diphosphate. The enzyme catalyses IMP + diphosphate = hypoxanthine + 5-phospho-alpha-D-ribose 1-diphosphate. It participates in purine metabolism; GMP biosynthesis via salvage pathway; GMP from guanine: step 1/1. The protein operates within purine metabolism; XMP biosynthesis via salvage pathway; XMP from xanthine: step 1/1. Its function is as follows. Purine salvage pathway enzyme that catalyzes the transfer of the ribosyl-5-phosphate group from 5-phospho-alpha-D-ribose 1-diphosphate (PRPP) to the N9 position of the 6-oxopurines guanine and xanthine to form the corresponding ribonucleotides GMP (guanosine 5'-monophosphate) and XMP (xanthosine 5'-monophosphate), with the release of PPi. To a lesser extent, also acts on hypoxanthine. The protein is Xanthine-guanine phosphoribosyltransferase of Ruegeria sp. (strain TM1040) (Silicibacter sp.).